The sequence spans 190 residues: Segregation and condensation protein B (190 aa).

This sequence belongs to the ScpB family. Homodimer. Homodimerization may be required to stabilize the binding of ScpA to the Smc head domains. Component of a cohesin-like complex composed of ScpA, ScpB and the Smc homodimer, in which ScpA and ScpB bind to the head domain of Smc. The presence of the three proteins is required for the association of the complex with DNA.

It is found in the cytoplasm. Its function is as follows. Participates in chromosomal partition during cell division. May act via the formation of a condensin-like complex containing Smc and ScpA that pull DNA away from mid-cell into both cell halves. The polypeptide is Segregation and condensation protein B (Bacillus cereus (strain B4264)).